The sequence spans 130 residues: Albumin-1 A (130 aa).

A signal peptide spans 1–26 (MASVKLASLIVLFATLGMFLTKNVGA). 3 disulfides stabilise this stretch: Cys-29/Cys-46, Cys-33/Cys-48, and Cys-41/Cys-58. 2 consecutive propeptides follow at residues 64-69 (VFLRTN) and 123-130 (LLKSVSTA).

Post-translationally, the C-terminal glycine may be removed from PA1b. Major component of both the cotyledons and embryonic axes of mature seeds.

In terms of biological role, PA1b binds to basic 7S globulin (BG) and stimulates its phosphorylation activity. Involved in the signal transduction system to regulate the growth and differentiation as a hormone peptide. Toxic to various insects through binding to a high affinity binding site in the insect gut. The sequence is that of Albumin-1 A from Pisum sativum (Garden pea).